The following is a 735-amino-acid chain: Photosystem I P700 chlorophyll a apoprotein A2 (735 aa).

8 helical membrane passes run 47 to 70 (IFAS…FHVA), 136 to 159 (LFTG…LHLQ), 176 to 200 (LNHH…HVAI), 274 to 292 (MAHH…GHMY), 331 to 354 (LHFQ…QHIY), 370 to 396 (AALY…IFFI), 418 to 440 (AIIS…LYVH), and 518 to 536 (FLVH…LILV). Cysteine 560 and cysteine 569 together coordinate [4Fe-4S] cluster. 2 consecutive transmembrane segments (helical) span residues 576–597 (AFYL…YFHW) and 644–666 (LSVW…MFLI). Residues histidine 655, methionine 663, and tyrosine 671 each contribute to the chlorophyll a site. Tryptophan 672 serves as a coordination point for phylloquinone. Residues 708-728 (LVGLVHFSVGYIFTYAAFLIA) traverse the membrane as a helical segment.

The protein belongs to the PsaA/PsaB family. The PsaA/B heterodimer binds the P700 chlorophyll special pair and subsequent electron acceptors. PSI consists of a core antenna complex that captures photons, and an electron transfer chain that converts photonic excitation into a charge separation. The eukaryotic PSI reaction center is composed of at least 11 subunits. Requires P700 is a chlorophyll a/chlorophyll a' dimer, A0 is one or more chlorophyll a, A1 is one or both phylloquinones and FX is a shared 4Fe-4S iron-sulfur center. as cofactor.

The protein resides in the plastid. It is found in the chloroplast thylakoid membrane. It catalyses the reaction reduced [plastocyanin] + hnu + oxidized [2Fe-2S]-[ferredoxin] = oxidized [plastocyanin] + reduced [2Fe-2S]-[ferredoxin]. Its function is as follows. PsaA and PsaB bind P700, the primary electron donor of photosystem I (PSI), as well as the electron acceptors A0, A1 and FX. PSI is a plastocyanin/cytochrome c6-ferredoxin oxidoreductase, converting photonic excitation into a charge separation, which transfers an electron from the donor P700 chlorophyll pair to the spectroscopically characterized acceptors A0, A1, FX, FA and FB in turn. Oxidized P700 is reduced on the lumenal side of the thylakoid membrane by plastocyanin or cytochrome c6. The chain is Photosystem I P700 chlorophyll a apoprotein A2 from Chlamydomonas moewusii (Chlamydomonas eugametos).